We begin with the raw amino-acid sequence, 666 residues long: tRNA 5-methylaminomethyl-2-thiouridine biosynthesis bifunctional protein MnmC (666 aa).

The tract at residues 1-245 (MKQYAIQPAN…KREMLCGVMA (245 aa)) is tRNA (mnm(5)s(2)U34)-methyltransferase. The interval 270–666 (IGGGIASALL…RKLLKGKAVK (397 aa)) is FAD-dependent cmnm(5)s(2)U34 oxidoreductase.

This sequence in the N-terminal section; belongs to the methyltransferase superfamily. tRNA (mnm(5)s(2)U34)-methyltransferase family. The protein in the C-terminal section; belongs to the DAO family. Requires FAD as cofactor.

It is found in the cytoplasm. The enzyme catalyses 5-aminomethyl-2-thiouridine(34) in tRNA + S-adenosyl-L-methionine = 5-methylaminomethyl-2-thiouridine(34) in tRNA + S-adenosyl-L-homocysteine + H(+). In terms of biological role, catalyzes the last two steps in the biosynthesis of 5-methylaminomethyl-2-thiouridine (mnm(5)s(2)U) at the wobble position (U34) in tRNA. Catalyzes the FAD-dependent demodification of cmnm(5)s(2)U34 to nm(5)s(2)U34, followed by the transfer of a methyl group from S-adenosyl-L-methionine to nm(5)s(2)U34, to form mnm(5)s(2)U34. The polypeptide is tRNA 5-methylaminomethyl-2-thiouridine biosynthesis bifunctional protein MnmC (Citrobacter koseri (strain ATCC BAA-895 / CDC 4225-83 / SGSC4696)).